A 142-amino-acid chain; its full sequence is Deoxyuridine 5'-triphosphate nucleotidohydrolase (142 aa).

Substrate-binding positions include Arg-62–Gly-64, Asn-75, and Thr-79–Asp-81.

The protein belongs to the dUTPase family. Mg(2+) serves as cofactor.

It carries out the reaction dUTP + H2O = dUMP + diphosphate + H(+). The protein operates within pyrimidine metabolism; dUMP biosynthesis; dUMP from dCTP (dUTP route): step 2/2. In terms of biological role, this enzyme is involved in nucleotide metabolism: it produces dUMP, the immediate precursor of thymidine nucleotides and it decreases the intracellular concentration of dUTP so that uracil cannot be incorporated into DNA. The protein is Deoxyuridine 5'-triphosphate nucleotidohydrolase of Picosynechococcus sp. (strain ATCC 27264 / PCC 7002 / PR-6) (Agmenellum quadruplicatum).